The chain runs to 1359 residues: Tripeptidyl-peptidase 2 (1359 aa).

Residues 45–81 (AASTTTRGGPSPSAGVAPRAMPSSSSSPPSAAEGTTA) are disordered. The segment covering 64 to 81 (AMPSSSSSPPSAAEGTTA) has biased composition (low complexity). Positions 102–600 (EIGVDRFLAA…HGLLQVDRAF (499 aa)) constitute a Peptidase S8 domain. Catalysis depends on charge relay system residues aspartate 126, histidine 353, and serine 539.

The protein belongs to the peptidase S8 family.

The catalysed reaction is Release of an N-terminal tripeptide from a polypeptide.. Serine protease that may function in the proteasome pathway. The sequence is that of Tripeptidyl-peptidase 2 (TPP2) from Oryza sativa subsp. japonica (Rice).